The following is a 118-amino-acid chain: Vacuolar ATPase assembly integral membrane protein vma-21 (118 aa).

Residues 1–35 (MATRRIISQEKTLLEKDDRIGSSPAASEKSNITPA) lie on the Cytoplasmic side of the membrane. The chain crosses the membrane as a helical span at residues 36–56 (VPASVIIKLLAFTFAMIVIPI). Residues 57 to 73 (SSYFLTVDRLFKGNSTY) lie on the Lumenal side of the membrane. A helical transmembrane segment spans residues 74–94 (AGATAAIMANVVLIGYIIVAM). Residues 95–118 (AEDQSDQENEKKGGGGKGEGKKDL) are Cytoplasmic-facing. The disordered stretch occupies residues 98-118 (QSDQENEKKGGGGKGEGKKDL). Residues 102–118 (ENEKKGGGGKGEGKKDL) show a composition bias toward basic and acidic residues. The Prevents secretion from ER signature appears at 115 to 118 (KKDL).

Belongs to the VMA21 family.

It localises to the endoplasmic reticulum membrane. Its subcellular location is the endoplasmic reticulum-Golgi intermediate compartment membrane. It is found in the cytoplasmic vesicle. The protein localises to the COPII-coated vesicle membrane. Functionally, required for the assembly of the V0 complex of the vacuolar ATPase (V-ATPase) in the endoplasmic reticulum. This is Vacuolar ATPase assembly integral membrane protein vma-21 (vma-21) from Neurospora crassa (strain ATCC 24698 / 74-OR23-1A / CBS 708.71 / DSM 1257 / FGSC 987).